The following is a 261-amino-acid chain: Shikimate dehydrogenase (NADP(+)) (261 aa).

Residues 13–15 (SLS) and Thr60 each bind shikimate. The active-site Proton acceptor is Lys64. 2 residues coordinate shikimate: Asn85 and Asp100. NADP(+) contacts are provided by residues 121–125 (GAGGA) and Ile202. Residue Tyr204 coordinates shikimate. An NADP(+)-binding site is contributed by Gly225.

Belongs to the shikimate dehydrogenase family. As to quaternary structure, homodimer.

The enzyme catalyses shikimate + NADP(+) = 3-dehydroshikimate + NADPH + H(+). The protein operates within metabolic intermediate biosynthesis; chorismate biosynthesis; chorismate from D-erythrose 4-phosphate and phosphoenolpyruvate: step 4/7. In terms of biological role, involved in the biosynthesis of the chorismate, which leads to the biosynthesis of aromatic amino acids. Catalyzes the reversible NADPH linked reduction of 3-dehydroshikimate (DHSA) to yield shikimate (SA). The chain is Shikimate dehydrogenase (NADP(+)) from Exiguobacterium sibiricum (strain DSM 17290 / CCUG 55495 / CIP 109462 / JCM 13490 / 255-15).